Reading from the N-terminus, the 61-residue chain is Large ribosomal subunit protein uL30 (61 aa).

This sequence belongs to the universal ribosomal protein uL30 family. Part of the 50S ribosomal subunit.

The polypeptide is Large ribosomal subunit protein uL30 (Chlorobium phaeovibrioides (strain DSM 265 / 1930) (Prosthecochloris vibrioformis (strain DSM 265))).